Consider the following 218-residue polypeptide: Adapter protein MecA (218 aa).

This sequence belongs to the MecA family. Homodimer.

In terms of biological role, enables the recognition and targeting of unfolded and aggregated proteins to the ClpC protease or to other proteins involved in proteolysis. The protein is Adapter protein MecA of Exiguobacterium sp. (strain ATCC BAA-1283 / AT1b).